Reading from the N-terminus, the 1497-residue chain is Collagen alpha-1(XVII) chain (1497 aa).

2 disordered regions span residues 1 to 154 and 167 to 186; these read MDVT…PSTR and GSRSASVSPTRNSSNTLPIP. The Cytoplasmic segment spans residues 1 to 467; the sequence is MDVTKKNKRD…CGSCCSWWKW (467 aa). The segment at 1 to 566 is nonhelical region (NC16); the sequence is MDVTKKNKRD…MMEQENGNLR (566 aa). The segment covering 9-19 has biased composition (basic and acidic residues); sequence RDGTEVTERIV. Polar residues-rich tracts occupy residues 57 to 96 and 169 to 183; these read LTHGSSGYINSTGSTRGHASTSSYRRAHSPASTLPNSPGS and RSASVSPTRNSSNTL. A necessary for interaction with DST and for the recruitment of DST to hemidesmosome region spans residues 145–230; the sequence is RLQSASPSTR…WSSTLPAGSS (86 aa). The chain crosses the membrane as a helical; Signal-anchor for type II membrane protein span at residues 468–488; it reads LLGLLLTWLLLLGLLFGLIAL. Topologically, residues 489–1497 are extracellular; it reads AEEVRKLKAR…RRRRSIAVKP (1009 aa). Ser-544 is modified (phosphoserine; by CK2). Disordered stretches follow at residues 562-1011, 1209-1234, and 1261-1316; these read NGNL…SSSG, GLSFIPGPPGPPGPPGPRGPPGVSGA, and SFIV…TGGG. The triple-helical region stretch occupies residues 567 to 1482; the sequence is GSPGPKGDMG…KGEKGDKGDQ (916 aa). Residues 590–602 are compositionally biased toward pro residues; sequence PGIPGPLGHPGPQ. Low complexity-rich tracts occupy residues 604 to 635, 661 to 673, 735 to 748, and 774 to 796; these read PKGQKGSVGDPGMEGPMGQRGREGPMGPRGEA, PGSVGPKGSSGSP, EPGAKGAMGPAGPD, and DPGKPGLTGPQGPQGLPGTPGRP. Pro residues-rich tracts occupy residues 820 to 841, 858 to 881, and 907 to 916; these read PGPPGPPGAMGPPGPPGAPGPA, PPGPPGPRGPPGPSIPGPPGPRGP, and PPGPPGPPGP. 2 stretches are compositionally biased toward low complexity: residues 936 to 946 and 968 to 987; these read GFSTSGSSSFG and PGVPGALGIPSGPSEGGSSS. Pro residues-rich tracts occupy residues 994 to 1004, 1214 to 1228, and 1266 to 1275; these read PPGPPGPPGPP, PGPPGPPGPPGPRGP, and PPGPPGPQGP. Residues 1289–1312 show a composition bias toward low complexity; that stretch reads SRGSSSSSHSSSVRRGSSYSSSMS. N-linked (GlcNAc...) asparagine glycosylation occurs at Asn-1421. Residues 1434–1497 are disordered; it reads GAIQGPPGQK…RRRRSIAVKP (64 aa). Positions 1458–1469 are enriched in pro residues; that stretch reads AGPPGHPGPPGP. Positions 1472–1481 are enriched in basic and acidic residues; that stretch reads HKGEKGDKGD. The segment at 1483 to 1497 is nonhelical region (NC1); that stretch reads VYAGRRRRRSIAVKP. A compositionally biased stretch (basic residues) spans 1486 to 1497; that stretch reads GRRRRRSIAVKP.

Homotrimers of alpha 1(XVII)chains. Interacts (via cytoplasmic region) with ITGB4 (via cytoplasmic region). Interacts (via cytoplasmic region) with DST isoform 3 (via N-terminus). Interacts (via N-terminus) with PLEC. Interacts (via cytoplasmic region) with DSP. In terms of processing, the intracellular/endo domain is disulfide-linked. Post-translationally, prolines at the third position of the tripeptide repeating unit (G-X-Y) are hydroxylated in some or all of the chains. The ectodomain is shedded from the surface of keratinocytes resulting in a 120-kDa soluble form, also named as 120 kDa linear IgA disease antigen. The shedding is mediated by membrane-bound metalloproteases. This cleavage is inhibited by phosphorylation at Ser-544. As to expression, detected in skin. In the cornea, it is detected in the epithelial basement membrane, the epithelial cells, and at a lower level in stromal cells (at protein level). Stratified squamous epithelia. Found in hemidesmosomes. Expressed in cornea, oral mucosa, esophagus, intestine, kidney collecting ducts, ureter, bladder, urethra and thymus but is absent in lung, blood vessels, skeletal muscle and nerves.

The protein resides in the cell junction. It localises to the hemidesmosome. Its subcellular location is the membrane. The protein localises to the secreted. It is found in the extracellular space. The protein resides in the extracellular matrix. It localises to the basement membrane. Its function is as follows. May play a role in the integrity of hemidesmosome and the attachment of basal keratinocytes to the underlying basement membrane. In terms of biological role, the 120 kDa linear IgA disease antigen is an anchoring filament component involved in dermal-epidermal cohesion. Is the target of linear IgA bullous dermatosis autoantibodies. The polypeptide is Collagen alpha-1(XVII) chain (COL17A1) (Homo sapiens (Human)).